The sequence spans 2424 residues: Voltage-dependent P/Q-type calcium channel subunit alpha-1A (2424 aa).

The Cytoplasmic segment spans residues 1–98 (MARFGDEMPA…KYAKKITEWP (98 aa)). One copy of the I repeat lies at 85 to 363 (NVVRKYAKKI…LVLGVLSGEF (279 aa)). A helical membrane pass occupies residues 99–117 (PFEYMILATIIANCIVLAL). At 118–135 (EQHLPDDDKTPMSERLDD) the chain is on the extracellular side. Residues 136–155 (TEPYFIGIFCFEAGIKIIAL) traverse the membrane as a helical segment. The Cytoplasmic segment spans residues 156–167 (GFAFHKGSYLRN). The chain crosses the membrane as a helical span at residues 168–185 (GWNVMDFVVVLTGILATV). The Extracellular segment spans residues 186–190 (GTEFD). Residues 191–209 (LRTLRAVRVLRPLKLVSGI) traverse the membrane as a helical segment. Residues 210–228 (PSLQVVLKSIMKAMIPLLQ) lie on the Cytoplasmic side of the membrane. Residues 229-248 (IGLLLFFAILIFAIIGLEFY) form a helical membrane-spanning segment. Topologically, residues 249–335 (MGKFHTTCFE…NSNDASGNTW (87 aa)) are extracellular. A glycan (N-linked (GlcNAc...) asparagine) is linked at N283. E318 lines the Ca(2+) pocket. The helical transmembrane segment at 336 to 360 (NWLYFIPLIIIGSFFMLNLVLGVLS) threads the bilayer. The Cytoplasmic portion of the chain corresponds to 361–487 (GEFAKERERV…FYIRRMVKTQ (127 aa)). The segment at 383–400 (QQIERELNGYMEWISKAE) is binding to the beta subunit. T409 is subject to Phosphothreonine. Phosphoserine occurs at positions 448 and 451. The stretch at 473-717 (ERRMRFYIRR…VFLAIAVDNL (245 aa)) is one II repeat. A helical membrane pass occupies residues 488 to 506 (AFYWTVLSLVALNTLCVAI). The Extracellular segment spans residues 507 to 521 (VHYNQPEWLSDFLYY). A helical membrane pass occupies residues 522 to 541 (AEFIFLGLFMSEMFIKMYGL). At 542–549 (GTRPYFHS) the chain is on the cytoplasmic side. The chain crosses the membrane as a helical span at residues 550–568 (SFNCFDCGVIIGSIFEVIW). The Extracellular segment spans residues 569-578 (AVIKPGTSFG). The chain crosses the membrane as a helical span at residues 579–597 (ISVLRALRLLRIFKVTKYW). At 598–616 (ASLRNLVVSLLNSMKSIIS) the chain is on the cytoplasmic side. A helical membrane pass occupies residues 617 to 636 (LLFLLFLFIVVFALLGMQLF). Residues 637-689 (GGQFNFDEGTPPTNFDTFPAAIMTVFQILTGEDWNEVMYDGIKSQGGVQGGMV) are Extracellular-facing. E668 provides a ligand contact to Ca(2+). A helical transmembrane segment spans residues 690–714 (FSIYFIVLTLFGNYTLLNVFLAIAV). The Cytoplasmic portion of the chain corresponds to 715 to 1253 (DNLANAQELT…RLCHYILNLR (539 aa)). Phosphoserine occurs at positions 750, 753, and 790. The disordered stretch occupies residues 819–1229 (HLDRPLVVDP…GEDGPKPMPP (411 aa)). Composition is skewed to basic and acidic residues over residues 893-912 (ELSR…REGG), 922-931 (EAERGKAGDP), and 969-996 (RPGE…RSGE). Polar residues predominate over residues 1053 to 1065 (PNLSTTRPIQQDL). A phosphoserine mark is found at S1091 and S1104. Residues 1110–1140 (SSTDPAGPTPATAANPQNSTASRRTPNNPGN) are compositionally biased toward low complexity. The segment covering 1151 to 1168 (ENSLIVTNPSTAQTNSAK) has biased composition (polar residues). Residues 1204–1214 (LPKKEDEKKEE) are compositionally biased toward basic and acidic residues. Residues 1240–1523 (NPLRRLCHYI…IFVALIIITF (284 aa)) form an III repeat. A helical transmembrane segment spans residues 1254 to 1272 (YFEMCILMVIAMSSIALAA). Topologically, residues 1273–1288 (EDPVQPNAPRNNVLRY) are extracellular. The chain crosses the membrane as a helical span at residues 1289–1308 (FDYVFTGVFTFEMVIKMIDL). Over 1309–1320 (GLVLHQGAYFRD) the chain is Cytoplasmic. The chain crosses the membrane as a helical span at residues 1321-1339 (LWNILDFIVVSGALVAFAF). The Extracellular portion of the chain corresponds to 1340 to 1350 (TGNSKGKDINT). Residues 1351–1369 (IKSLRVLRVLRPLKTIKRL) traverse the membrane as a helical segment. The Cytoplasmic segment spans residues 1370-1388 (PKLKAVFDCVVNSLKNVFN). The helical transmembrane segment at 1389-1408 (ILIVYMLFMFIFAVVAVQLF) threads the bilayer. The Extracellular segment spans residues 1409-1495 (KGKFFHCTDE…QGPSPGYRME (87 aa)). Residue E1469 coordinates Ca(2+). Residues 1496–1520 (MSIFYVVYFVVFPFFFVNIFVALII) traverse the membrane as a helical segment. The Cytoplasmic portion of the chain corresponds to 1521 to 1575 (ITFQEQGDKMMEEYSLEKNERACIDFAISAKPLTRHMPQNKQSFQYRMWQFVVSP). An IV repeat occupies 1560-1823 (NKQSFQYRMW…LFVAVIMDNF (264 aa)). A helical membrane pass occupies residues 1576–1604 (PFEYTIMAMIALNTIVLMMKFYGASVAYD). The Extracellular segment spans residues 1605–1609 (NALKV). Residues 1610-1629 (FNIVFTSLFSLECLLKVLAF) form a helical membrane-spanning segment. Residues 1630 to 1637 (GILNYFRD) lie on the Cytoplasmic side of the membrane. The chain crosses the membrane as a helical span at residues 1638–1656 (AWNIFDFVTVLGSITDILV). Over 1657–1665 (TEFGNNFIN) the chain is Extracellular. An N-linked (GlcNAc...) asparagine glycan is attached at N1665. A helical membrane pass occupies residues 1666 to 1684 (LSFLRLFRAARLIKLLRQG). Residues 1685–1703 (YTIRILLWTFVQSFKALPY) are Cytoplasmic-facing. The helical transmembrane segment at 1704–1723 (VCLLIAMLFFIYAIIGMQVF) threads the bilayer. At 1724 to 1795 (GNIGIDMEDE…ILTPECGNEF (72 aa)) the chain is on the extracellular side. The helical transmembrane segment at 1796 to 1820 (AYFYFVSFIFLCSFLMLNLFVAVIM) threads the bilayer. The Cytoplasmic segment spans residues 1821-2424 (DNFEYLTRDS…GGPRASAPSP (604 aa)). T1993 carries the post-translational modification Phosphothreonine. Residues 1997–2424 (FQRMEPPPDE…GGPRASAPSP (428 aa)) are disordered. Positions 2037 to 2053 (SWVTQRAQEMFQKTGTW) are enriched in polar residues. Residues S2054, S2072, S2084, S2086, S2127, and S2148 each carry the phosphoserine modification. Residues 2074 to 2090 (EMREMSQDGYSDSEHCL) show a composition bias toward basic and acidic residues. Basic and acidic residues-rich tracts occupy residues 2142-2159 (RRLD…ENQR) and 2200-2210 (PSREREQERGR). Residues 2211–2229 (PKDRKHRPHHHHHHHHHPG) show a composition bias toward basic residues. Over residues 2249-2262 (VARVRPARAPALAH) the composition is skewed to low complexity. The segment covering 2280 to 2305 (RRARRPRPRQRRRPRRRRGGGGRALR) has biased composition (basic residues).

Belongs to the calcium channel alpha-1 subunit (TC 1.A.1.11) family. CACNA1A subfamily. In terms of assembly, voltage-dependent calcium channels are multisubunit complexes, consisting of alpha-1, alpha-2, beta and delta subunits in a 1:1:1:1 ratio. The channel activity is directed by the pore-forming and voltage-sensitive alpha-1 subunit. In many cases, this subunit is sufficient to generate voltage-sensitive calcium channel activity. The auxiliary subunits beta and alpha-2/delta linked by a disulfide bridge regulate the channel activity. Interacts with CABP1. Interacts with the spider omega-agatoxin-IVA (AC P30288). Interacts with TSPOAP1. In terms of tissue distribution, brain specific. Purkinje cells contain predominantly P-type VSCC, the Q-type being a prominent calcium current in cerebellar granule cells.

It localises to the cell membrane. It carries out the reaction Ca(2+)(in) = Ca(2+)(out). In terms of biological role, voltage-sensitive calcium channels (VSCC) mediate the entry of calcium ions into excitable cells and are also involved in a variety of calcium-dependent processes, including muscle contraction, hormone or neurotransmitter release, gene expression, cell motility, cell division and cell death. The isoform alpha-1A gives rise to P and/or Q-type calcium currents. P/Q-type calcium channels belong to the 'high-voltage activated' (HVA) group and are specifically blocked by the spider omega-agatoxin-IVA (AC P54282). They are however insensitive to dihydropyridines (DHP). The sequence is that of Voltage-dependent P/Q-type calcium channel subunit alpha-1A (CACNA1A) from Oryctolagus cuniculus (Rabbit).